A 124-amino-acid polypeptide reads, in one-letter code: Small ribosomal subunit protein uS12 (124 aa).

Aspartate 89 carries the post-translational modification 3-methylthioaspartic acid.

It belongs to the universal ribosomal protein uS12 family. As to quaternary structure, part of the 30S ribosomal subunit. Contacts proteins S8 and S17. May interact with IF1 in the 30S initiation complex.

With S4 and S5 plays an important role in translational accuracy. In terms of biological role, interacts with and stabilizes bases of the 16S rRNA that are involved in tRNA selection in the A site and with the mRNA backbone. Located at the interface of the 30S and 50S subunits, it traverses the body of the 30S subunit contacting proteins on the other side and probably holding the rRNA structure together. The combined cluster of proteins S8, S12 and S17 appears to hold together the shoulder and platform of the 30S subunit. This chain is Small ribosomal subunit protein uS12, found in Erwinia amylovora (Fire blight bacteria).